A 198-amino-acid chain; its full sequence is MATNVTVHNATCFSQALTEDFWDGVKLSFTVSIVIGLVIGGIIWTLVTCLSRRRASASISPRMPKSSSRRPRSSSHNHALNRSGFYRNSSCERRSNLSLASLTFQRQTSQEQTDPFTRKPSFRASTFHPFMQCPPLAVEADSQLVTLPRSNNTSPTANNTVNLSRPDFHWSNNSLRLGPSTQTPPPAYDSIIKAFPDS.

The Bipartite nuclear localization signal signature appears at arginine 52–arginine 72. Disordered regions lie at residues serine 58 to serine 83 and asparagine 172 to serine 198. Residues asparagine 172–threonine 181 show a composition bias toward polar residues.

This sequence belongs to the MYCT1 family.

It localises to the nucleus. Its function is as follows. May regulate certain MYC target genes, MYC seems to be a direct upstream transcriptional activator. The sequence is that of Myc target protein 1 homolog (myct1) from Xenopus tropicalis (Western clawed frog).